A 470-amino-acid chain; its full sequence is Properdin (470 aa).

Positions 1–26 (MTAPVQVPQSLLLLLMLLLTLPATGS) are cleaved as a signal peptide. TSP type-1 domains lie at 27–75 (DPVL…QACR), 76–133 (SPRW…QCCP), 135–190 (MGGW…QVCP), 192–254 (HGAW…PPCP), 256–312 (AGGW…VPCP), 314–376 (DGEW…QNCI), and 380–463 (KGSW…PACK). Disulfide bonds link cysteine 31–cysteine 55, cysteine 42–cysteine 71, and cysteine 56–cysteine 74. Residues tryptophan 82 and tryptophan 85 are each glycosylated (C-linked (Man) tryptophan). Disulfide bonds link cysteine 88-cysteine 126, cysteine 92-cysteine 132, cysteine 103-cysteine 110, cysteine 131-cysteine 169, cysteine 147-cysteine 183, cysteine 151-cysteine 189, and cysteine 162-cysteine 173. Tryptophan 138, tryptophan 141, and tryptophan 144 each carry a C-linked (Man) tryptophan glycan. The O-linked (Fuc...) threonine glycan is linked to threonine 150. 3 C-linked (Man) tryptophan glycosylation sites follow: tryptophan 195, tryptophan 198, and tryptophan 201. 3 cysteine pairs are disulfide-bonded: cysteine 204–cysteine 247, cysteine 208–cysteine 253, and cysteine 223–cysteine 237. O-linked (Fuc...) serine glycosylation is present at serine 207. 2 C-linked (Man) tryptophan glycosylation sites follow: tryptophan 259 and tryptophan 262. Intrachain disulfides connect cysteine 268/cysteine 305, cysteine 272/cysteine 311, and cysteine 283/cysteine 295. Threonine 271 carries O-linked (Fuc...) threonine glycosylation. Residues tryptophan 320 and tryptophan 323 are each glycosylated (C-linked (Man) tryptophan). Intrachain disulfides connect cysteine 326-cysteine 369, cysteine 336-cysteine 375, and cysteine 349-cysteine 359. The segment at 350-358 (KGRKFNGQR) is interaction with Complement C3 beta chain. C-linked (Man) tryptophan glycans are attached at residues tryptophan 383, tryptophan 386, and tryptophan 389. 3 cysteine pairs are disulfide-bonded: cysteine 392/cysteine 456, cysteine 396/cysteine 462, and cysteine 408/cysteine 440. A glycan (N-linked (GlcNAc...) asparagine) is linked at asparagine 429.

As to quaternary structure, in plasma, properdin exists as dimers, trimers or tetramers in the relative proportions of 26:54:20. Interacts with the pro-C3-convertase enzyme complex (C3b-Bb) comprised of Complement C3 beta chain (C3b) and the Complement factor B Bb fragment (Bb), where it binds (via its TSP type-1 5 domain) with C3b and Bb. This interaction stabilizes the complex and allows it to become the active C3-convertase enzyme complex (C3b-Bb-FP). Interacts with C3b. Interacts with CFB.

The protein resides in the secreted. A positive regulator of the alternate pathway of complement. It binds to and stabilizes the C3- and C5-convertase enzyme complexes. Inhibits CFI-CFH mediated degradation of Inhibits CFI-CFH mediated degradation of Complement C3 beta chain (C3b). The polypeptide is Properdin (CFP) (Cavia porcellus (Guinea pig)).